The primary structure comprises 170 residues: Calcineurin subunit B type 2 (170 aa).

EF-hand domains are found at residues 18 to 46 (DEIR…FMSL), 50 to 85 (QQNP…FSVK), 87 to 122 (DKLS…MVGN), and 128 to 163 (QLQQ…TDIH). Positions 31, 33, 35, 42, 63, 65, 67, 69, 74, 100, 102, 104, 106, 111, 141, 143, 145, 147, and 152 each coordinate Ca(2+). The residue at position 35 (serine 35) is a Phosphoserine.

It belongs to the calcineurin regulatory subunit family. Composed of a catalytic subunit (A) and a regulatory subunit (B). Interacts with sra.

Its function is as follows. Calcineurin is a calcium-binding and calmodulin-binding protein found in all cells from yeast to mammals, and a calcium-dependent, calmodulin-stimulated protein phosphatase. The chain is Calcineurin subunit B type 2 (CanB2) from Drosophila melanogaster (Fruit fly).